A 1487-amino-acid polypeptide reads, in one-letter code: Probable serine/threonine-protein kinase roco11 (1487 aa).

The disordered stretch occupies residues Thr108–Gln134. The span at His116–Gln125 shows a compositional bias: basic residues. 3 LRR repeats span residues Asn295–Leu316, His318–Thr340, and Asn341–Gln362. The region spanning Lys379–Ser564 is the Roc domain. The small GTPase-like stretch occupies residues Lys379–Ser564. Residues Gly392 to Ser399, Asp448 to Gln452, and Thr507 to Asp510 each bind GTP. The 195-residue stretch at Val678–Leu872 folds into the COR domain. The segment at Ser891 to Ile1007 is disordered. Residues Ser897–Thr931 show a composition bias toward low complexity. Residues Val932–Thr950 show a composition bias toward polar residues. The segment covering Asn951–Ile1007 has biased composition (low complexity). One can recognise a Protein kinase domain in the interval Val1185–Tyr1452. ATP is bound by residues Ile1191–Val1199 and Lys1216. The Proton acceptor role is filled by Asp1313. The interval Lys1464–Lys1487 is disordered.

Belongs to the protein kinase superfamily. TKL Ser/Thr protein kinase family. ROCO subfamily.

It catalyses the reaction L-seryl-[protein] + ATP = O-phospho-L-seryl-[protein] + ADP + H(+). It carries out the reaction L-threonyl-[protein] + ATP = O-phospho-L-threonyl-[protein] + ADP + H(+). This Dictyostelium discoideum (Social amoeba) protein is Probable serine/threonine-protein kinase roco11 (roco11).